Here is a 240-residue protein sequence, read N- to C-terminus: Transposase for insertion sequence element IS3411 (240 aa).

Residues 125-240 form the Integrase catalytic domain; it reads VAERPDQLWV…RASMVFTKRR (116 aa).

Its function is as follows. Involved in the transposition of the insertion sequence. This Escherichia coli protein is Transposase for insertion sequence element IS3411.